The chain runs to 411 residues: Tyrosine--tRNA ligase (411 aa).

L-tyrosine is bound at residue Tyr34. The 'HIGH' region motif lies at 39-48; the sequence is CTATSLHIGS. Residues Tyr171 and Gln175 each coordinate L-tyrosine. The 'KMSKS' region motif lies at 231 to 235; that stretch reads KMGKT. Lys234 serves as a coordination point for ATP. An S4 RNA-binding domain is found at 345 to 411; the sequence is ISAYELFHEA…GKKRHILVRV (67 aa).

This sequence belongs to the class-I aminoacyl-tRNA synthetase family. TyrS type 1 subfamily. As to quaternary structure, homodimer.

It is found in the cytoplasm. It catalyses the reaction tRNA(Tyr) + L-tyrosine + ATP = L-tyrosyl-tRNA(Tyr) + AMP + diphosphate + H(+). Its function is as follows. Catalyzes the attachment of tyrosine to tRNA(Tyr) in a two-step reaction: tyrosine is first activated by ATP to form Tyr-AMP and then transferred to the acceptor end of tRNA(Tyr). This chain is Tyrosine--tRNA ligase, found in Rickettsia peacockii (strain Rustic).